The following is a 358-amino-acid chain: Peptide chain release factor 1 (358 aa).

Residue Gln-233 is modified to N5-methylglutamine.

This sequence belongs to the prokaryotic/mitochondrial release factor family. Methylated by PrmC. Methylation increases the termination efficiency of RF1.

The protein localises to the cytoplasm. Peptide chain release factor 1 directs the termination of translation in response to the peptide chain termination codons UAG and UAA. The chain is Peptide chain release factor 1 from Staphylococcus aureus (strain MRSA252).